The primary structure comprises 537 residues: Pancreatic secretory granule membrane major glycoprotein GP2 (537 aa).

Residues 1-28 (MPHLMERMVGSGLLWLALVSCILTQASA) form the signal peptide. The interval 41–60 (SYGLDLDCGAPGTPEAHVCF) is beta hairpin. Disulfide bonds link Cys-48–Cys-59, Cys-63–Cys-157, Cys-85–Cys-172, Cys-107–Cys-145, Cys-113–Cys-177, Cys-138–Cys-146, Cys-190–Cys-200, Cys-194–Cys-209, Cys-211–Cys-241, Cys-229–Cys-320, and Cys-261–Cys-284. The tract at residues 61–81 (DPCQNYTLLDEPFRSTENSAG) is D10C. An N-linked (GlcNAc...) (high mannose) asparagine glycan is attached at Asn-65. N-linked (GlcNAc...) asparagine glycosylation is found at Asn-88, Asn-122, and Asn-134. In terms of domain architecture, EGF-like spans 186–230 (VEDKCEKACRPEEECLALNSTWGCFCRQDLNSSDVHSLQPQLDCG). N-linked (GlcNAc...) asparagine glycans are attached at residues Asn-204, Asn-216, and Asn-260. The segment at 228-321 (DCGPREIKVK…TILNINFQCA (94 aa)) is ZP-N. Residues 228 to 484 (DCGPREIKVK…PSCSRSQVRS (257 aa)) enclose the ZP domain. Residues Asn-291 and Asn-342 are each glycosylated (N-linked (GlcNAc...) asparagine). A flexible ZP-N/ZP-C linker region spans residues 322–345 (YPLDMKVSLQAALQPIVSSLNVSV). The internal hydrophobic patch (IHP) stretch occupies residues 346 to 357 (DGNGEFIVRMAL). The tract at residues 346–484 (DGNGEFIVRM…PSCSRSQVRS (139 aa)) is ZP-C. The N-linked (GlcNAc...) asparagine glycan is linked to Asn-362. Disulfide bonds link Cys-401/Cys-461, Cys-422/Cys-477, and Cys-466/Cys-473. Residues 491–499 (LARVLDLGP) are external hydrophobic patch (EHP). Asn-512 is lipidated: GPI-anchor amidated asparagine. A propeptide spans 513 to 537 (GTPSTAGFLVAWPMVLLTVLLAWLF) (removed in mature form).

In terms of assembly, interacts with SYCN. Interacts with bacterial adhesin fimH. N-glycosylated. Glycosylated Asn-65 may be required for interaction with bacterial adhesin fimH. Expressed in pancreas (at protein level). Specifically expressed by M (microfold) cells which are atypical epithelial cells of the intestine (at protein level).

The protein resides in the zymogen granule membrane. The protein localises to the secreted. It is found in the cell membrane. Its subcellular location is the apical cell membrane. It localises to the membrane raft. The protein resides in the endosome. Functions as an intestinal M-cell transcytotic receptor specific for type-I-piliated bacteria that participates in the mucosal immune response toward these bacteria. At the apical membrane of M-cells it binds fimH, a protein of the bacteria type I pilus tip. Internalizes bound bacteria, like E.coli and S.typhimurium, from the lumen of the intestine and delivers them, through M-cells, to the underlying organized lymphoid follicles where they are captured by antigen-presenting dendritic cells to elicit a mucosal immune response. This is Pancreatic secretory granule membrane major glycoprotein GP2 from Homo sapiens (Human).